A 533-amino-acid polypeptide reads, in one-letter code: Flavin-containing monooxygenase 5 (533 aa).

R5 carries the dimethylated arginine modification. Residues 10–14 (GSGAS), E33, and 41–42 (LW) contribute to the FAD site. S54 carries the post-translational modification Phosphoserine. Y56 is modified (phosphotyrosine). S58 bears the Phosphoserine mark. 62–63 (NT) lines the FAD pocket. NADP(+) is bound at residue 196 to 199 (SGGD). Position 284 is a phosphothreonine (T284). S401 is subject to Phosphoserine. A helical membrane pass occupies residues 513 to 533 (LVTVRVLMLAVTFLAVILAYF).

It belongs to the FMO family. Requires FAD as cofactor.

The protein resides in the microsome membrane. It is found in the endoplasmic reticulum membrane. It carries out the reaction N,N-dimethylaniline + NADPH + O2 + H(+) = N,N-dimethylaniline N-oxide + NADP(+) + H2O. The catalysed reaction is NADPH + O2 + H(+) = H2O2 + NADP(+). The enzyme catalyses heptan-2-one + NADPH + O2 + H(+) = pentyl acetate + NADP(+) + H2O. It catalyses the reaction octan-3-one + NADPH + O2 + H(+) = pentyl propanoate + NADP(+) + H2O. It carries out the reaction octan-3-one + NADPH + O2 + H(+) = ethyl hexanoate + NADP(+) + H2O. The catalysed reaction is hexan-3-one + NADPH + O2 + H(+) = ethyl butanoate + NADP(+) + H2O. The enzyme catalyses hexan-3-one + NADPH + O2 + H(+) = propyl propanoate + NADP(+) + H2O. It catalyses the reaction heptan-4-one + NADPH + O2 + H(+) = propyl butanoate + NADP(+) + H2O. It carries out the reaction (2E)-geranial + NADPH + O2 + H(+) = (1E)-2,6-dimethylhepta-1,5-dien-1-yl formate + NADP(+) + H2O. The catalysed reaction is sulcatone + NADPH + O2 + H(+) = 4-methylpent-3-en-1-yl acetate + NADP(+) + H2O. Acts as a Baeyer-Villiger monooxygenase on a broad range of substrates. Catalyzes the insertion of an oxygen atom into a carbon-carbon bond adjacent to a carbonyl, which converts ketones to esters. Active on diverse carbonyl compounds, whereas soft nucleophiles are mostly non- or poorly reactive. In contrast with other forms of FMO it is non- or poorly active on 'classical' substrates such as drugs, pesticides, and dietary components containing soft nucleophilic heteroatoms. Able to oxidize drug molecules bearing a carbonyl group on an aliphatic chain, such as nabumetone and pentoxifylline. Also, in the absence of substrates, shows slow but yet significant NADPH oxidase activity. Acts as a positive modulator of cholesterol biosynthesis as well as glucose homeostasis, promoting metabolic aging via pleiotropic effects. In Rattus norvegicus (Rat), this protein is Flavin-containing monooxygenase 5.